The primary structure comprises 184 residues: Bacterial microcompartment shell protein PduT (184 aa).

BMC domains follow at residues 4–86 and 96–182; these read AIGI…PAIS and AVGI…RQMV. Cys38 provides a ligand contact to [4Fe-4S] cluster.

It belongs to the bacterial microcompartments protein family. In terms of assembly, homotrimerizes to form a pseudohexamer with a large central pore, which is probably the binding site for the [4Fe-4S] center. Interacts with PduS. Originally suggested to be a homotetramer; this is incorrect. Requires [4Fe-4S] cluster as cofactor.

Its subcellular location is the bacterial microcompartment. It participates in polyol metabolism; 1,2-propanediol degradation. In terms of biological role, a minor shell protein of the bacterial microcompartment (BMC) dedicated to 1,2-propanediol (1,2-PD) degradation. Overexpression of this protein leads to cells with either deposits or having lamina-like structures in the cytoplasm. Not absolutely required to make artificial BMCs. May selectively transport specific metabolites. Functionally, expression of a cosmid containing the full 21-gene pdu operon in E.coli allows E.coli to grow on 1,2-propanediol (1,2-PD) with the appearance of bacterial microcompartments (BMC) in its cytoplasm. The 1,2-PD-specific bacterial microcompartment (BMC) concentrates low levels of 1,2-PD catabolic enzymes, concentrates volatile reaction intermediates thus enhancing pathway flux and keeps the level of toxic, mutagenic propionaldehyde low. This is Bacterial microcompartment shell protein PduT from Citrobacter freundii.